A 212-amino-acid polypeptide reads, in one-letter code: KxDL motif-containing protein CG10681 (212 aa).

A disordered region spans residues 128–159; the sequence is RSSLAEEAEDDTEAQAKKTAETPAPAAAKPVL. A compositionally biased stretch (low complexity) spans 148–157; that stretch reads ETPAPAAAKP.

It belongs to the KXD1 family.

The chain is KxDL motif-containing protein CG10681 from Drosophila melanogaster (Fruit fly).